Here is a 178-residue protein sequence, read N- to C-terminus: Small ribosomal subunit protein uS7c (178 aa).

The span at 137 to 146 (QKKEEIEKSK) shows a compositional bias: basic and acidic residues. The interval 137-178 (QKKEEIEKSKSPVNNNKKFISKNKKSKNKKQKKRLKRKKNIY) is disordered. Basic residues predominate over residues 155-178 (FISKNKKSKNKKQKKRLKRKKNIY).

The protein belongs to the universal ribosomal protein uS7 family. As to quaternary structure, part of the 30S ribosomal subunit.

Its subcellular location is the plastid. Its function is as follows. One of the primary rRNA binding proteins, it binds directly to 16S rRNA where it nucleates assembly of the head domain of the 30S subunit. The chain is Small ribosomal subunit protein uS7c (rps7) from Euglena longa (Euglenophycean alga).